Here is a 194-residue protein sequence, read N- to C-terminus: Cysteine and glycine-rich protein 3 (194 aa).

Residues 1 to 5 (MPNWG) form an interaction with TCAP region. Positions 10 to 61 (CGACEKTVYHAEEIQCNGRSFHKTCFHCMACRKALDSTTVAAHESEIYCKVC) constitute an LIM zinc-binding 1 domain. A Nuclear localization signal motif is present at residues 64-69 (RRYGPK). Positions 94-106 (QSPKQARSATTSS) are interaction with CLF2. Phosphoserine is present on residues Ser95 and Ser153. An LIM zinc-binding 2 domain is found at 120-171 (CPRCGKSVYAAEKVMGGGKPWHKTCFRCAICGKSLESTNVTDKDGELYCKVC).

As to quaternary structure, self-associates. Oligomeric in the cytoplasm and monomeric in the nucleus. Homooligomers preferentially form along the actin cytoskeleton. Interacts with TCAP, LDHD, MYOD1, MYOG, ACTN2, NRAP, MYF6. Interacts (via N-terminus) with GLRX3 (via C-terminus) and PPP3CA; GLRX3 and calcineurin compete for interaction with CSRP3. Interacts with CFL2; the stoichiometry influences F-actin depolymerization and possibly two molecules of CFL2 can interact with one molecule of CSRP3 resulting in the highest functional impact; the interaction is stronger with phosphorylated CFL2.

It is found in the nucleus. The protein localises to the cytoplasm. Its subcellular location is the cytoskeleton. It localises to the myofibril. The protein resides in the sarcomere. It is found in the z line. In terms of biological role, positive regulator of myogenesis. Acts as a cofactor for myogenic bHLH transcription factors such as MYOD1, and probably MYOG and MYF6. Enhances the DNA-binding activity of the MYOD1:TCF3 isoform E47 complex and may promote formation of a functional MYOD1:TCF3 isoform E47:MEF2A complex involved in myogenesis. Plays a crucial and specific role in the organization of cytosolic structures in cardiomyocytes. Could play a role in mechanical stretch sensing. May be a scaffold protein that promotes the assembly of interacting proteins at Z-line structures. It is essential for calcineurin anchorage to the Z line. Required for stress-induced calcineurin-NFAT activation. The role in regulation of cytoskeleton dynamics by association with CFL2 is reported conflictingly. Proposed to contribute to the maintenance of muscle cell integrity through an actin-based mechanism. Can directly bind to actin filaments, cross-link actin filaments into bundles without polarity selectivity and protect them from dilution- and cofilin-mediated depolymerization; the function seems to involve its self-association. In vitro can inhibit PKC/PRKCA activity. Proposed to be involved in cardiac stress signaling by down-regulating excessive PKC/PRKCA signaling. This is Cysteine and glycine-rich protein 3 (CSRP3) from Bos taurus (Bovine).